The following is a 191-amino-acid chain: Protein GrpE (191 aa).

Belongs to the GrpE family. In terms of assembly, homodimer.

The protein localises to the cytoplasm. In terms of biological role, participates actively in the response to hyperosmotic and heat shock by preventing the aggregation of stress-denatured proteins, in association with DnaK and GrpE. It is the nucleotide exchange factor for DnaK and may function as a thermosensor. Unfolded proteins bind initially to DnaJ; upon interaction with the DnaJ-bound protein, DnaK hydrolyzes its bound ATP, resulting in the formation of a stable complex. GrpE releases ADP from DnaK; ATP binding to DnaK triggers the release of the substrate protein, thus completing the reaction cycle. Several rounds of ATP-dependent interactions between DnaJ, DnaK and GrpE are required for fully efficient folding. This is Protein GrpE from Listeria welshimeri serovar 6b (strain ATCC 35897 / DSM 20650 / CCUG 15529 / CIP 8149 / NCTC 11857 / SLCC 5334 / V8).